Reading from the N-terminus, the 465-residue chain is UDP-N-acetylmuramate--L-alanine ligase (465 aa).

An ATP-binding site is contributed by 115–121; it reads GAHGKTT.

Belongs to the MurCDEF family.

Its subcellular location is the cytoplasm. It carries out the reaction UDP-N-acetyl-alpha-D-muramate + L-alanine + ATP = UDP-N-acetyl-alpha-D-muramoyl-L-alanine + ADP + phosphate + H(+). The protein operates within cell wall biogenesis; peptidoglycan biosynthesis. In terms of biological role, cell wall formation. The protein is UDP-N-acetylmuramate--L-alanine ligase of Coxiella burnetii (strain Dugway 5J108-111).